A 130-amino-acid polypeptide reads, in one-letter code: Large ribosomal subunit protein bL17 (130 aa).

It belongs to the bacterial ribosomal protein bL17 family. In terms of assembly, part of the 50S ribosomal subunit. Contacts protein L32.

The sequence is that of Large ribosomal subunit protein bL17 from Shewanella halifaxensis (strain HAW-EB4).